The following is a 260-amino-acid chain: 3'-5' ssDNA/RNA exonuclease TatD (260 aa).

A divalent metal cation-binding residues include E91, H127, and H152.

This sequence belongs to the metallo-dependent hydrolases superfamily. TatD-type hydrolase family. TatD subfamily. Monomer. Requires Mg(2+) as cofactor.

The protein localises to the cytoplasm. 3'-5' exonuclease that prefers single-stranded DNA and RNA. May play a role in the H(2)O(2)-induced DNA damage repair. This is 3'-5' ssDNA/RNA exonuclease TatD from Enterobacter lignolyticus (strain SCF1).